A 32-amino-acid chain; its full sequence is Protein YthB (32 aa).

The chain is Protein YthB from Escherichia coli (strain K12).